The following is a 341-amino-acid chain: L-threonine 3-dehydrogenase (341 aa).

Residue Cys-38 coordinates Zn(2+). Catalysis depends on charge relay system residues Thr-40 and His-43. Residues His-63, Glu-64, Cys-93, Cys-96, Cys-99, and Cys-107 each contribute to the Zn(2+) site. NAD(+) contacts are provided by residues Ile-175, Asp-195, Arg-200, 262 to 264 (LGI), and 286 to 287 (IY).

It belongs to the zinc-containing alcohol dehydrogenase family. Homotetramer. It depends on Zn(2+) as a cofactor.

The protein localises to the cytoplasm. It carries out the reaction L-threonine + NAD(+) = (2S)-2-amino-3-oxobutanoate + NADH + H(+). It functions in the pathway amino-acid degradation; L-threonine degradation via oxydo-reductase pathway; glycine from L-threonine: step 1/2. Its function is as follows. Catalyzes the NAD(+)-dependent oxidation of L-threonine to 2-amino-3-ketobutyrate. The polypeptide is L-threonine 3-dehydrogenase (Salmonella choleraesuis (strain SC-B67)).